The sequence spans 309 residues: Voltage-dependent anion channel-forming protein mll4386 (309 aa).

3 helical membrane-spanning segments follow: residues 32-52 (ILPQ…LARW), 58-78 (GVFN…YLSF), and 227-247 (IVCL…TPLF).

Belongs to the anion channel-forming bestrophin (TC 1.A.46) family.

It localises to the cell membrane. The sequence is that of Voltage-dependent anion channel-forming protein mll4386 from Mesorhizobium japonicum (strain LMG 29417 / CECT 9101 / MAFF 303099) (Mesorhizobium loti (strain MAFF 303099)).